Consider the following 66-residue polypeptide: ATP synthase protein 8 (66 aa).

Residues 8–24 (TWLMMIMSMFLALFIIF) form a helical membrane-spanning segment. An N6-acetyllysine; alternate modification is found at Lys54. At Lys54 the chain carries N6-succinyllysine; alternate. Position 57 is an N6-acetyllysine (Lys57).

The protein belongs to the ATPase protein 8 family. As to quaternary structure, F-type ATPases have 2 components, CF(1) - the catalytic core - and CF(0) - the membrane proton channel. Component of an ATP synthase complex composed of ATP5PB, ATP5MC1, ATP5F1E, ATP5PD, ATP5ME, ATP5PF, ATP5MF, MT-ATP6, MT-ATP8, ATP5F1A, ATP5F1B, ATP5F1D, ATP5F1C, ATP5PO, ATP5MG, ATP5MK and ATP5MJ. Interacts with PRICKLE3.

The protein localises to the mitochondrion membrane. In terms of biological role, mitochondrial membrane ATP synthase (F(1)F(0) ATP synthase or Complex V) produces ATP from ADP in the presence of a proton gradient across the membrane which is generated by electron transport complexes of the respiratory chain. F-type ATPases consist of two structural domains, F(1) - containing the extramembraneous catalytic core and F(0) - containing the membrane proton channel, linked together by a central stalk and a peripheral stalk. During catalysis, ATP synthesis in the catalytic domain of F(1) is coupled via a rotary mechanism of the central stalk subunits to proton translocation. Part of the complex F(0) domain. Minor subunit located with subunit a in the membrane. In Cervus elaphus hippelaphus (European red deer), this protein is ATP synthase protein 8 (MT-ATP8).